A 238-amino-acid polypeptide reads, in one-letter code: MADS-box protein 04g005320 (238 aa).

In terms of domain architecture, MADS-box spans 1-61 (MGRGKVELKR…GKLYEFCSTS (61 aa)). Residues 87–177 (SQNNYQEYMK…KTKLEENSVA (91 aa)) form the K-box domain.

The protein resides in the nucleus. Functionally, probable MADS-box transcription factor that functions with J2 and EJ2 in meristem maturation. The polypeptide is MADS-box protein 04g005320 (Solanum lycopersicum (Tomato)).